A 378-amino-acid polypeptide reads, in one-letter code: MQSTIKPVEYDRPVAAGTVCGVGQAWAKVPDAPSAEERAALKERIKALLVREKAVLVAHYYVDAELQELADETGGCVADSLEMARFGRDHDAQTLIVAGVRFMGETAKILSPNKRILMPDLDATCSLDLGCPVDEFSAFCDAHPDRTVVVYANTSAAVKARADWMVTSSIGLEIVADLHARGEKIIWAPDRHLGSYIQKKTGADMLLWQGSCLVHDEFKGIELDLLRAEYPDAKVLVHPESPENVVAQADVVGSTTQLIDAAVKFNATHFIVATDLGILHKMQLAAPGKTFIAAPTAGNSATCKSCAHCPWMAMNGLANLADVLERGHNEIFVDPAIGERARLPIDRMLDFAAAHKKRVQASGDLQRDQQLFANVGAA.

Iminosuccinate contacts are provided by His59 and Ser80. Position 125 (Cys125) interacts with [4Fe-4S] cluster. Iminosuccinate-binding positions include 151-153 (YAN) and Ser168. Residue Cys212 coordinates [4Fe-4S] cluster. Iminosuccinate is bound by residues 238–240 (HPE) and Thr255. Position 309 (Cys309) interacts with [4Fe-4S] cluster.

It belongs to the quinolinate synthase family. Type 1 subfamily. The cofactor is [4Fe-4S] cluster.

It is found in the cytoplasm. It carries out the reaction iminosuccinate + dihydroxyacetone phosphate = quinolinate + phosphate + 2 H2O + H(+). It functions in the pathway cofactor biosynthesis; NAD(+) biosynthesis; quinolinate from iminoaspartate: step 1/1. Catalyzes the condensation of iminoaspartate with dihydroxyacetone phosphate to form quinolinate. The protein is Quinolinate synthase of Burkholderia lata (strain ATCC 17760 / DSM 23089 / LMG 22485 / NCIMB 9086 / R18194 / 383).